A 343-amino-acid polypeptide reads, in one-letter code: Cyclic AMP-AMP-AMP synthase (343 aa).

This sequence belongs to the CD-NTase family. D01 subfamily. The cofactor is Mg(2+).

It carries out the reaction 3 ATP = 2',3',3'-c-tri-AMP + 3 diphosphate. In terms of biological role, cyclic nucleotide synthase (second messenger synthase) of a CBASS antivirus system. CBASS (cyclic oligonucleotide-based antiphage signaling system) provides immunity against bacteriophage. The CD-NTase protein synthesizes cyclic nucleotides in response to infection; these serve as specific second messenger signals. The signals activate a diverse range of effectors, leading to bacterial cell death and thus abortive phage infection. A type II-C(AAAA) CBASS system. Cyclic trinucleotide synthase that catalyzes the synthesis of 2',3',3'-cyclic AMP-AMP-AMP (2',3',3'-c-tri-AMP or 2'3'3'-cAAA) as the major product, as well as another cyclic AMP(4) 2'-5'-linked minor product that acts as a second messenger for cell signal transduction. This is Cyclic AMP-AMP-AMP synthase from Acinetobacter sp. (strain ATCC 27244 / 9458).